Reading from the N-terminus, the 388-residue chain is Processive diacylglycerol beta-glucosyltransferase (388 aa).

This sequence belongs to the glycosyltransferase 28 family. UgtP subfamily.

The protein resides in the cell membrane. It catalyses the reaction a 1,2-diacyl-3-O-(beta-D-glucopyranosyl)-sn-glycerol + UDP-alpha-D-glucose = a 1,2-diacyl-3-O-(beta-D-Glc-(1-&gt;6)-beta-D-Glc)-sn-glycerol + UDP + H(+). It carries out the reaction a 1,2-diacyl-3-O-(beta-D-Glc-(1-&gt;6)-beta-D-Glc)-sn-glycerol + UDP-alpha-D-glucose = a 1,2-diacyl-3-O-(beta-D-Glc-(1-&gt;6)-beta-D-Glc-(1-&gt;6)-beta-D-Glc)-sn-glycerol + UDP + H(+). The catalysed reaction is a 1,2-diacyl-sn-glycerol + UDP-alpha-D-glucose = a 1,2-diacyl-3-O-(beta-D-glucopyranosyl)-sn-glycerol + UDP + H(+). The protein operates within glycolipid metabolism; diglucosyl-diacylglycerol biosynthesis. Processive glucosyltransferase involved in the biosynthesis of both the bilayer- and non-bilayer-forming membrane glucolipids. Is able to successively transfer up to three glucosyl residues to diacylglycerol (DAG), thereby catalyzing the formation of beta-monoglucosyl-DAG (3-O-(beta-D-glucopyranosyl)-1,2-diacyl-sn-glycerol), beta-diglucosyl-DAG (3-O-(beta-D-glucopyranosyl-beta-(1-&gt;6)-D-glucopyranosyl)-1,2-diacyl-sn-glycerol) and beta-triglucosyl-DAG (3-O-(beta-D-glucopyranosyl-beta-(1-&gt;6)-D-glucopyranosyl-beta-(1-&gt;6)-D-glucopyranosyl)-1,2-diacyl-sn-glycerol). Beta-diglucosyl-DAG is the predominant glycolipid found in Bacillales and is also used as a membrane anchor for lipoteichoic acid (LTA). This Bacillus cereus (strain ATCC 10987 / NRS 248) protein is Processive diacylglycerol beta-glucosyltransferase.